A 213-amino-acid chain; its full sequence is 5''-phosphoribostamycin phosphatase (213 aa).

The active-site Tele-phosphohistidine intermediate is histidine 8. The active site involves histidine 155.

It belongs to the histidine phosphatase superfamily.

It catalyses the reaction 5''-phosphoribostamycin + H2O = ribostamycin + phosphate. It functions in the pathway antibiotic biosynthesis; butirosin biosynthesis. Functionally, catalyzes dephosphorylation of 5''-phosphoribostamycin to generate ribostamycinin the biosynthetic pathway of butirosin. The chain is 5''-phosphoribostamycin phosphatase (btrP) from Niallia circulans (Bacillus circulans).